Reading from the N-terminus, the 84-residue chain is Large ribosomal subunit protein bL27 (84 aa).

A disordered region spans residues 1–20; that stretch reads MAHKKGGGSTKNGRDSNPKY.

This sequence belongs to the bacterial ribosomal protein bL27 family.

This Chlorobaculum tepidum (strain ATCC 49652 / DSM 12025 / NBRC 103806 / TLS) (Chlorobium tepidum) protein is Large ribosomal subunit protein bL27.